The following is an 824-amino-acid chain: Type IV secretion system protein PtlC (824 aa).

ATP is bound at residue 456–463 (GQSGSGKT).

The protein belongs to the TrbE/VirB4 family.

Its subcellular location is the cell membrane. Component of the type IV secretion system ptl essential for secretion of assembled pertussis toxin (PTX) through the outer membrane. The chain is Type IV secretion system protein PtlC (ptlC) from Bordetella pertussis (strain Tohama I / ATCC BAA-589 / NCTC 13251).